Consider the following 283-residue polypeptide: Spore coat polysaccharide biosynthesis protein SpsK (283 aa).

The protein belongs to the dTDP-4-dehydrorhamnose reductase family.

It functions in the pathway spore coat biogenesis; spore coat polysaccharide biosynthesis. In Bacillus subtilis (strain 168), this protein is Spore coat polysaccharide biosynthesis protein SpsK (spsK).